Consider the following 268-residue polypeptide: Phosphonates import ATP-binding protein PhnC (268 aa).

Residues 11–254 form the ABC transporter domain; that stretch reads LHAEAVTKRF…EVMAIYQRAE (244 aa). 43–50 lines the ATP pocket; it reads GLSGSGKS.

This sequence belongs to the ABC transporter superfamily. Phosphonates importer (TC 3.A.1.9.1) family. The complex is composed of two ATP-binding proteins (PhnC), two transmembrane proteins (PhnE) and a solute-binding protein (PhnD).

It is found in the cell membrane. It carries out the reaction phosphonate(out) + ATP + H2O = phosphonate(in) + ADP + phosphate + H(+). Part of the ABC transporter complex PhnCDE involved in phosphonates import. Responsible for energy coupling to the transport system. This Nocardia farcinica (strain IFM 10152) protein is Phosphonates import ATP-binding protein PhnC.